Consider the following 178-residue polypeptide: MDASNPIVHPIGDHHAVDLEEGPLIVTMKELPGMPGTIGGLALRVGQFLFAAAAIVIMVTGDEFTNYTAFCYLVAAMSLQFLWSFMLAILDTYALLIKRGLRNSVLLSLFVVGDWVTATLSLAAACSTAGVTVLFDNDLNYCGQMHCHRYQLSAAMAFLSWLLIGMSSLLTFWLWASE.

Residues 1–37 (MDASNPIVHPIGDHHAVDLEEGPLIVTMKELPGMPGT) are Cytoplasmic-facing. Residues 38 to 58 (IGGLALRVGQFLFAAAAIVIM) form a helical membrane-spanning segment. Topologically, residues 59 to 69 (VTGDEFTNYTA) are extracellular. N-linked (GlcNAc...) asparagine glycosylation occurs at Asn66. A helical transmembrane segment spans residues 70–90 (FCYLVAAMSLQFLWSFMLAIL). The Cytoplasmic portion of the chain corresponds to 91-104 (DTYALLIKRGLRNS). Residues 105–125 (VLLSLFVVGDWVTATLSLAAA) form a helical membrane-spanning segment. Residues 126–154 (CSTAGVTVLFDNDLNYCGQMHCHRYQLSA) are Extracellular-facing. The helical transmembrane segment at 155–175 (AMAFLSWLLIGMSSLLTFWLW) threads the bilayer. Over 176 to 178 (ASE) the chain is Cytoplasmic.

It belongs to the Casparian strip membrane proteins (CASP) family. Homodimer and heterodimers.

Its subcellular location is the cell membrane. The chain is CASP-like protein 5B1 from Ginkgo biloba (Ginkgo).